The primary structure comprises 261 residues: Ribonuclease HII (261 aa).

An RNase H type-2 domain is found at 72-260 (AVICGIDEVG…IKSIVLEKLD (189 aa)). A divalent metal cation-binding residues include Asp78, Glu79, and Asp170.

This sequence belongs to the RNase HII family. The cofactor is Mn(2+). Requires Mg(2+) as cofactor.

The protein localises to the cytoplasm. It catalyses the reaction Endonucleolytic cleavage to 5'-phosphomonoester.. In terms of biological role, endonuclease that specifically degrades the RNA of RNA-DNA hybrids. In Staphylococcus carnosus (strain TM300), this protein is Ribonuclease HII.